The primary structure comprises 375 residues: Chaperone protein DnaJ (375 aa).

Positions 5–70 constitute a J domain; sequence DFYEVLGVER…SKRAAYDQYG (66 aa). The segment at 134-212 adopts a CR-type zinc-finger fold; that stretch reads GTTVSIRVPT…CHGEGRVEEY (79 aa). C147, C150, C164, C167, C186, C189, C200, and C203 together coordinate Zn(2+). 4 CXXCXGXG motif repeats span residues 147-154, 164-171, 186-193, and 200-207; these read CKPCDGSG, CPTCGGIG, CPRCHGQG, and CNSCHGEG.

It belongs to the DnaJ family. Homodimer. Zn(2+) serves as cofactor.

The protein resides in the cytoplasm. In terms of biological role, participates actively in the response to hyperosmotic and heat shock by preventing the aggregation of stress-denatured proteins and by disaggregating proteins, also in an autonomous, DnaK-independent fashion. Unfolded proteins bind initially to DnaJ; upon interaction with the DnaJ-bound protein, DnaK hydrolyzes its bound ATP, resulting in the formation of a stable complex. GrpE releases ADP from DnaK; ATP binding to DnaK triggers the release of the substrate protein, thus completing the reaction cycle. Several rounds of ATP-dependent interactions between DnaJ, DnaK and GrpE are required for fully efficient folding. Also involved, together with DnaK and GrpE, in the DNA replication of plasmids through activation of initiation proteins. This is Chaperone protein DnaJ from Pseudomonas entomophila (strain L48).